The primary structure comprises 861 residues: Ribosome biogenesis protein BOP1 homolog (861 aa).

The disordered stretch occupies residues methionine 1–arginine 237. Residues asparagine 29–serine 45 are compositionally biased toward polar residues. Acidic residues-rich tracts occupy residues aspartate 62–aspartate 77 and serine 87–alanine 143. 3 stretches are compositionally biased toward basic and acidic residues: residues glutamate 144–lysine 156, glutamate 174–alanine 190, and proline 212–aspartate 223. WD repeat units lie at residues glycine 522–threonine 561, proline 563–serine 603, lysine 692–lysine 730, proline 733–glutamine 772, leucine 776–glutamine 815, and valine 831–threonine 861.

The protein belongs to the WD repeat BOP1/ERB1 family.

The protein resides in the nucleus. The protein localises to the nucleolus. It localises to the nucleoplasm. Functionally, required for maturation of ribosomal RNAs and formation of the large ribosomal subunit. In Culex quinquefasciatus (Southern house mosquito), this protein is Ribosome biogenesis protein BOP1 homolog.